We begin with the raw amino-acid sequence, 443 residues long: Methyl-coenzyme M reductase subunit beta (443 aa).

Tyr-367 provides a ligand contact to coenzyme M. Gly-369 contributes to the coenzyme B binding site.

It belongs to the methyl-coenzyme M reductase beta subunit family. As to quaternary structure, MCR is a hexamer of two alpha, two beta, and two gamma chains, forming a dimer of heterotrimers. The cofactor is coenzyme F430.

It localises to the cytoplasm. It carries out the reaction coenzyme B + methyl-coenzyme M = methane + coenzyme M-coenzyme B heterodisulfide. It functions in the pathway one-carbon metabolism; methyl-coenzyme M reduction; methane from methyl-coenzyme M: step 1/1. Its function is as follows. Component of the methyl-coenzyme M reductase (MCR) I that catalyzes the reductive cleavage of methyl-coenzyme M (CoM-S-CH3 or 2-(methylthio)ethanesulfonate) using coenzyme B (CoB or 7-mercaptoheptanoylthreonine phosphate) as reductant which results in the production of methane and the mixed heterodisulfide of CoB and CoM (CoM-S-S-CoB). This is the final step in methanogenesis. The chain is Methyl-coenzyme M reductase subunit beta (mcrB) from Methanococcus voltae.